The primary structure comprises 461 residues: tRNA modification GTPase MnmE (461 aa).

3 residues coordinate (6S)-5-formyl-5,6,7,8-tetrahydrofolate: arginine 27, glutamate 89, and arginine 128. One can recognise a TrmE-type G domain in the interval 224 to 382; that stretch reads GLATAIVGRP…LENAIEQLFF (159 aa). Position 234 (asparagine 234) interacts with K(+). GTP is bound by residues 234-239, 253-259, and 278-281; these read NVGKSS, TDIAGTT, and DTAG. Mg(2+) is bound at residue serine 238. Threonine 253, isoleucine 255, and threonine 258 together coordinate K(+). A Mg(2+)-binding site is contributed by threonine 259. Lysine 461 serves as a coordination point for (6S)-5-formyl-5,6,7,8-tetrahydrofolate.

It belongs to the TRAFAC class TrmE-Era-EngA-EngB-Septin-like GTPase superfamily. TrmE GTPase family. Homodimer. Heterotetramer of two MnmE and two MnmG subunits. It depends on K(+) as a cofactor.

It is found in the cytoplasm. Exhibits a very high intrinsic GTPase hydrolysis rate. Involved in the addition of a carboxymethylaminomethyl (cmnm) group at the wobble position (U34) of certain tRNAs, forming tRNA-cmnm(5)s(2)U34. The protein is tRNA modification GTPase MnmE of Lactobacillus johnsonii (strain CNCM I-12250 / La1 / NCC 533).